A 664-amino-acid polypeptide reads, in one-letter code: UvrABC system protein B (664 aa).

The Helicase ATP-binding domain maps to 25 to 412; sequence KGLVSGLTDQ…LQVVEQLVRP (388 aa). An ATP-binding site is contributed by 38-45; sequence GVTGSGKT. The Beta-hairpin motif lies at 91–114; it reads YYDYYQPEAYVPQKDMYIEKDSDI. A Helicase C-terminal domain is found at 428–594; sequence QIDDLLEEVK…GIRKAIKDIN (167 aa). Positions 620–655 constitute a UVR domain; it reads ARLIKELESQMKKAAKNLEFERAALIRDRVVELRAA.

This sequence belongs to the UvrB family. Forms a heterotetramer with UvrA during the search for lesions. Interacts with UvrC in an incision complex.

It localises to the cytoplasm. Functionally, the UvrABC repair system catalyzes the recognition and processing of DNA lesions. A damage recognition complex composed of 2 UvrA and 2 UvrB subunits scans DNA for abnormalities. Upon binding of the UvrA(2)B(2) complex to a putative damaged site, the DNA wraps around one UvrB monomer. DNA wrap is dependent on ATP binding by UvrB and probably causes local melting of the DNA helix, facilitating insertion of UvrB beta-hairpin between the DNA strands. Then UvrB probes one DNA strand for the presence of a lesion. If a lesion is found the UvrA subunits dissociate and the UvrB-DNA preincision complex is formed. This complex is subsequently bound by UvrC and the second UvrB is released. If no lesion is found, the DNA wraps around the other UvrB subunit that will check the other stand for damage. The chain is UvrABC system protein B from Dehalococcoides mccartyi (strain CBDB1).